The chain runs to 300 residues: Transcription initiation factor IIB (300 aa).

Residues 2–34 (NKQKVCPACESAELIYDPERGEIVCAKCGYVIE) form a TFIIB-type zinc finger. Residues cysteine 7, cysteine 10, cysteine 26, and cysteine 29 each contribute to the Zn(2+) site. 2 tandem repeats follow at residues 114–197 (SELD…ARNL) and 210–291 (DYVN…ELVE).

The protein belongs to the TFIIB family.

In terms of biological role, stabilizes TBP binding to an archaeal box-A promoter. Also responsible for recruiting RNA polymerase II to the pre-initiation complex (DNA-TBP-TFIIB). This Pyrococcus furiosus (strain ATCC 43587 / DSM 3638 / JCM 8422 / Vc1) protein is Transcription initiation factor IIB.